The chain runs to 677 residues: Nuclear fusion protein FUS2 (677 aa).

Phosphothreonine is present on threonine 20. Serine 67, serine 72, and serine 84 each carry phosphoserine. Threonine 88 carries the post-translational modification Phosphothreonine. Phosphoserine occurs at positions 100 and 106. The 215-residue stretch at 112-326 (KFYKIVQEFY…KYSLFSNKLE (215 aa)) folds into the DH domain.

The protein localises to the cell tip. Its function is as follows. Promotes cell fusion during zygote formation. In Saccharomyces cerevisiae (strain ATCC 204508 / S288c) (Baker's yeast), this protein is Nuclear fusion protein FUS2 (FUS2).